The chain runs to 131 residues: D-ribose pyranase (131 aa).

H20 functions as the Proton donor in the catalytic mechanism. Residues D28, H98, and 120–122 (YAN) contribute to the substrate site.

It belongs to the RbsD / FucU family. RbsD subfamily. As to quaternary structure, homodecamer.

It is found in the cytoplasm. The enzyme catalyses beta-D-ribopyranose = beta-D-ribofuranose. The protein operates within carbohydrate metabolism; D-ribose degradation; D-ribose 5-phosphate from beta-D-ribopyranose: step 1/2. Its function is as follows. Catalyzes the interconversion of beta-pyran and beta-furan forms of D-ribose. This is D-ribose pyranase from Clostridium perfringens (strain 13 / Type A).